The sequence spans 364 residues: 3-isopropylmalate dehydrogenase (364 aa).

79–92 (GPKWEHLPPDQQPE) is an NAD(+) binding site. R100, R110, R139, and D228 together coordinate substrate. Mg(2+) contacts are provided by D228, D252, and D256. Residue 286–298 (GSAPDIAGKNIAN) participates in NAD(+) binding.

The protein belongs to the isocitrate and isopropylmalate dehydrogenases family. LeuB type 1 subfamily. In terms of assembly, homodimer. Mg(2+) serves as cofactor. Mn(2+) is required as a cofactor.

Its subcellular location is the cytoplasm. It carries out the reaction (2R,3S)-3-isopropylmalate + NAD(+) = 4-methyl-2-oxopentanoate + CO2 + NADH. It participates in amino-acid biosynthesis; L-leucine biosynthesis; L-leucine from 3-methyl-2-oxobutanoate: step 3/4. In terms of biological role, catalyzes the oxidation of 3-carboxy-2-hydroxy-4-methylpentanoate (3-isopropylmalate) to 3-carboxy-4-methyl-2-oxopentanoate. The product decarboxylates to 4-methyl-2 oxopentanoate. The chain is 3-isopropylmalate dehydrogenase from Escherichia coli (strain UTI89 / UPEC).